The following is an 80-amino-acid chain: Exodeoxyribonuclease 7 small subunit (80 aa).

Belongs to the XseB family. As to quaternary structure, heterooligomer composed of large and small subunits.

The protein resides in the cytoplasm. The enzyme catalyses Exonucleolytic cleavage in either 5'- to 3'- or 3'- to 5'-direction to yield nucleoside 5'-phosphates.. Bidirectionally degrades single-stranded DNA into large acid-insoluble oligonucleotides, which are then degraded further into small acid-soluble oligonucleotides. This is Exodeoxyribonuclease 7 small subunit from Streptomyces avermitilis (strain ATCC 31267 / DSM 46492 / JCM 5070 / NBRC 14893 / NCIMB 12804 / NRRL 8165 / MA-4680).